The primary structure comprises 217 residues: Peptide methionine sulfoxide reductase MsrA (217 aa).

Residue C56 is part of the active site.

It belongs to the MsrA Met sulfoxide reductase family.

The catalysed reaction is L-methionyl-[protein] + [thioredoxin]-disulfide + H2O = L-methionyl-(S)-S-oxide-[protein] + [thioredoxin]-dithiol. It catalyses the reaction [thioredoxin]-disulfide + L-methionine + H2O = L-methionine (S)-S-oxide + [thioredoxin]-dithiol. Its function is as follows. Has an important function as a repair enzyme for proteins that have been inactivated by oxidation. Catalyzes the reversible oxidation-reduction of methionine sulfoxide in proteins to methionine. The polypeptide is Peptide methionine sulfoxide reductase MsrA (Corynebacterium glutamicum (strain R)).